Reading from the N-terminus, the 253-residue chain is Phosphoribosylaminoimidazole-succinocarboxamide synthase (253 aa).

It belongs to the SAICAR synthetase family.

The enzyme catalyses 5-amino-1-(5-phospho-D-ribosyl)imidazole-4-carboxylate + L-aspartate + ATP = (2S)-2-[5-amino-1-(5-phospho-beta-D-ribosyl)imidazole-4-carboxamido]succinate + ADP + phosphate + 2 H(+). Its pathway is purine metabolism; IMP biosynthesis via de novo pathway; 5-amino-1-(5-phospho-D-ribosyl)imidazole-4-carboxamide from 5-amino-1-(5-phospho-D-ribosyl)imidazole-4-carboxylate: step 1/2. The chain is Phosphoribosylaminoimidazole-succinocarboxamide synthase from Jannaschia sp. (strain CCS1).